The following is a 497-amino-acid chain: Tryptophan decarboxylase 2 (497 aa).

Ala162, Ser163, Thr257, and Asn311 together coordinate pyridoxal 5'-phosphate. An N6-(pyridoxal phosphate)lysine modification is found at Lys314.

The protein belongs to the group II decarboxylase family. The cofactor is pyridoxal 5'-phosphate.

It catalyses the reaction L-tryptophan + H(+) = tryptamine + CO2. In terms of biological role, involved in serotonin biosynthesis. Catalyzes the decarboxylation of L-tryptophan to tryptamine, which is converted to serotonin by tryptamine 5-hydroxylase. May play a minor role in serotonin biosynthetis during senescence. Accumulation of serotonin attenuates leaf senescence. The sequence is that of Tryptophan decarboxylase 2 from Oryza sativa subsp. japonica (Rice).